The primary structure comprises 28 residues: Cycloviolin-B (28 aa).

A cross-link (cyclopeptide (Gly-Asn)) is located at residues 1–28 (GTACGESCYVLPCFTVGCTCTSSQCFKN). Intrachain disulfides connect Cys4/Cys18, Cys8/Cys20, and Cys13/Cys25.

Post-translationally, this is a cyclic peptide.

In terms of biological role, probably participates in a plant defense mechanism. Has anti-HIV activity. This is Cycloviolin-B from Leonia cymosa (Sacha uba).